A 193-amino-acid chain; its full sequence is MRLCDRDIEAWLDEGRLSINPRPPVERINGATVDVRLGNKFRTFRGHTAAFIDLSGPKDEVSAALDRVMSDEIVLDEGEAFYLHPGELALAVTLESVTLPADLVGWLDGRSSLARLGLMVHVTAHRIDPGWSGCIVLEFYNSGKLPLALRPGMLIGALSFEPLSGPAVRPYNRREDAKYRNQQGAVASRIDKD.

Residues 110-115 (RSSLAR), Asp-128, 136-138 (VLE), Tyr-171, Lys-178, and Gln-182 each bind dCTP. The active-site Proton donor/acceptor is Glu-138.

This sequence belongs to the dCTP deaminase family. As to quaternary structure, homotrimer.

It carries out the reaction dCTP + H2O + H(+) = dUTP + NH4(+). It participates in pyrimidine metabolism; dUMP biosynthesis; dUMP from dCTP (dUTP route): step 1/2. Its function is as follows. Catalyzes the deamination of dCTP to dUTP. The polypeptide is dCTP deaminase (Escherichia coli (strain K12 / MC4100 / BW2952)).